We begin with the raw amino-acid sequence, 342 residues long: Holliday junction branch migration complex subunit RuvB (342 aa).

The large ATPase domain (RuvB-L) stretch occupies residues 1 to 181 (MENRMVTPFD…FGMLCAMEFY (181 aa)). Residues Leu-20, Arg-21, Gly-62, Lys-65, Thr-66, Thr-67, 128–130 (EDY), Arg-171, Tyr-181, and Arg-218 contribute to the ATP site. Thr-66 contacts Mg(2+). A small ATPAse domain (RuvB-S) region spans residues 182–252 (TDEELMEIVV…GAKAALDLLE (71 aa)). A head domain (RuvB-H) region spans residues 255 to 342 (KEGLDKIDNK…KDNQVSIFNK (88 aa)). DNA-binding residues include Arg-310 and Arg-315.

The protein belongs to the RuvB family. As to quaternary structure, homohexamer. Forms an RuvA(8)-RuvB(12)-Holliday junction (HJ) complex. HJ DNA is sandwiched between 2 RuvA tetramers; dsDNA enters through RuvA and exits via RuvB. An RuvB hexamer assembles on each DNA strand where it exits the tetramer. Each RuvB hexamer is contacted by two RuvA subunits (via domain III) on 2 adjacent RuvB subunits; this complex drives branch migration. In the full resolvosome a probable DNA-RuvA(4)-RuvB(12)-RuvC(2) complex forms which resolves the HJ.

It localises to the cytoplasm. It catalyses the reaction ATP + H2O = ADP + phosphate + H(+). Functionally, the RuvA-RuvB-RuvC complex processes Holliday junction (HJ) DNA during genetic recombination and DNA repair, while the RuvA-RuvB complex plays an important role in the rescue of blocked DNA replication forks via replication fork reversal (RFR). RuvA specifically binds to HJ cruciform DNA, conferring on it an open structure. The RuvB hexamer acts as an ATP-dependent pump, pulling dsDNA into and through the RuvAB complex. RuvB forms 2 homohexamers on either side of HJ DNA bound by 1 or 2 RuvA tetramers; 4 subunits per hexamer contact DNA at a time. Coordinated motions by a converter formed by DNA-disengaged RuvB subunits stimulates ATP hydrolysis and nucleotide exchange. Immobilization of the converter enables RuvB to convert the ATP-contained energy into a lever motion, pulling 2 nucleotides of DNA out of the RuvA tetramer per ATP hydrolyzed, thus driving DNA branch migration. The RuvB motors rotate together with the DNA substrate, which together with the progressing nucleotide cycle form the mechanistic basis for DNA recombination by continuous HJ branch migration. Branch migration allows RuvC to scan DNA until it finds its consensus sequence, where it cleaves and resolves cruciform DNA. In Clostridium botulinum (strain ATCC 19397 / Type A), this protein is Holliday junction branch migration complex subunit RuvB.